We begin with the raw amino-acid sequence, 188 residues long: Elongation factor P (188 aa).

It belongs to the elongation factor P family.

It localises to the cytoplasm. The protein operates within protein biosynthesis; polypeptide chain elongation. In terms of biological role, involved in peptide bond synthesis. Stimulates efficient translation and peptide-bond synthesis on native or reconstituted 70S ribosomes in vitro. Probably functions indirectly by altering the affinity of the ribosome for aminoacyl-tRNA, thus increasing their reactivity as acceptors for peptidyl transferase. This Sulfurovum sp. (strain NBC37-1) protein is Elongation factor P.